The primary structure comprises 198 residues: 3-isopropylmalate dehydratase small subunit (198 aa).

This sequence belongs to the LeuD family. LeuD type 1 subfamily. In terms of assembly, heterodimer of LeuC and LeuD.

The catalysed reaction is (2R,3S)-3-isopropylmalate = (2S)-2-isopropylmalate. It functions in the pathway amino-acid biosynthesis; L-leucine biosynthesis; L-leucine from 3-methyl-2-oxobutanoate: step 2/4. Its function is as follows. Catalyzes the isomerization between 2-isopropylmalate and 3-isopropylmalate, via the formation of 2-isopropylmaleate. This chain is 3-isopropylmalate dehydratase small subunit, found in Mycobacterium leprae (strain Br4923).